We begin with the raw amino-acid sequence, 321 residues long: tRNA(Ile)-lysidine synthase (321 aa).

30–35 (SGGSDS) contacts ATP.

The protein belongs to the tRNA(Ile)-lysidine synthase family.

It localises to the cytoplasm. It catalyses the reaction cytidine(34) in tRNA(Ile2) + L-lysine + ATP = lysidine(34) in tRNA(Ile2) + AMP + diphosphate + H(+). Functionally, ligates lysine onto the cytidine present at position 34 of the AUA codon-specific tRNA(Ile) that contains the anticodon CAU, in an ATP-dependent manner. Cytidine is converted to lysidine, thus changing the amino acid specificity of the tRNA from methionine to isoleucine. This chain is tRNA(Ile)-lysidine synthase, found in Chlamydia trachomatis serovar D (strain ATCC VR-885 / DSM 19411 / UW-3/Cx).